The following is a 344-amino-acid chain: Phenylalanine--tRNA ligase alpha subunit (344 aa).

Residue Glu256 coordinates Mg(2+).

This sequence belongs to the class-II aminoacyl-tRNA synthetase family. Phe-tRNA synthetase alpha subunit type 1 subfamily. As to quaternary structure, tetramer of two alpha and two beta subunits. The cofactor is Mg(2+).

Its subcellular location is the cytoplasm. The enzyme catalyses tRNA(Phe) + L-phenylalanine + ATP = L-phenylalanyl-tRNA(Phe) + AMP + diphosphate + H(+). This Bacillus cytotoxicus (strain DSM 22905 / CIP 110041 / 391-98 / NVH 391-98) protein is Phenylalanine--tRNA ligase alpha subunit.